The chain runs to 40 residues: Mu-thomitoxin-Hme1b (40 aa).

Intrachain disulfides connect C2-C18, C9-C22, and C17-C33.

The protein belongs to the neurotoxin 19 (CSTX) family. Post-translationally, contains 3 disulfide bonds. Expressed by the venom gland.

Its subcellular location is the secreted. Blocks the Nav1.2/SCN2A, Nav1.4/SCN4A, Nav1.5/SCN5A and Nav1.6/SCN8A sodium channels. Shows a slight preference for the Nav1.2 and Nav1.4 channels. Reduces the peak amplitude of the sodium current and negatively shifts the steady-state inactivation process. Does not shift the threshold potential of activation or the voltage corresponding to maximal current. Does not change the reversal potential of the sodium current. May act on site 1 of the receptor. This chain is Mu-thomitoxin-Hme1b, found in Heriaeus mellotteei (Crab spider).